The primary structure comprises 331 residues: Pantothenate kinase (331 aa).

An ATP-binding site is contributed by 109–116 (GSVAVGKS).

This sequence belongs to the prokaryotic pantothenate kinase family.

The protein resides in the cytoplasm. The enzyme catalyses (R)-pantothenate + ATP = (R)-4'-phosphopantothenate + ADP + H(+). The protein operates within cofactor biosynthesis; coenzyme A biosynthesis; CoA from (R)-pantothenate: step 1/5. The protein is Pantothenate kinase of Rhizobium rhizogenes (strain K84 / ATCC BAA-868) (Agrobacterium radiobacter).